Here is a 355-residue protein sequence, read N- to C-terminus: Uroporphyrinogen decarboxylase (355 aa).

Substrate-binding positions include 27–31 (RQAGR), aspartate 78, tyrosine 155, serine 210, and histidine 328.

It belongs to the uroporphyrinogen decarboxylase family. Homodimer.

It localises to the cytoplasm. The enzyme catalyses uroporphyrinogen III + 4 H(+) = coproporphyrinogen III + 4 CO2. Its pathway is porphyrin-containing compound metabolism; protoporphyrin-IX biosynthesis; coproporphyrinogen-III from 5-aminolevulinate: step 4/4. Catalyzes the decarboxylation of four acetate groups of uroporphyrinogen-III to yield coproporphyrinogen-III. This is Uroporphyrinogen decarboxylase from Pseudomonas aeruginosa (strain LESB58).